Here is a 179-residue protein sequence, read N- to C-terminus: Ubiquitin-conjugating enzyme E2 C (179 aa).

The interval 1-31 is disordered; that stretch reads MASQNRDPVAASVAAARKGAEPSGGAARGPV. Position 2 is an N-acetylalanine (alanine 2). Serine 3 is subject to Phosphoserine. The region spanning 30-175 is the UBC core domain; the sequence is PVGKRLQQEL…LQETYSKQVS (146 aa). Cysteine 114 serves as the catalytic Glycyl thioester intermediate.

It belongs to the ubiquitin-conjugating enzyme family. In terms of assembly, component of the APC/C complex, composed of at least 14 distinct subunits that assemble into a complex of at least 19 chains with a combined molecular mass of around 1.2 MDa. Within this complex, directly interacts with ANAPC2. In terms of processing, autoubiquitinated by the APC/C complex, leading to its degradation by the proteasome. Its degradation plays a central role in APC/C regulation, allowing cyclin-A accumulation before S phase entry. APC/C substrates inhibit the autoubiquitination of UBE2C/UBCH10 but not its E2 function, hence APC/C remaining active until its substrates have been destroyed.

The catalysed reaction is S-ubiquitinyl-[E1 ubiquitin-activating enzyme]-L-cysteine + [E2 ubiquitin-conjugating enzyme]-L-cysteine = [E1 ubiquitin-activating enzyme]-L-cysteine + S-ubiquitinyl-[E2 ubiquitin-conjugating enzyme]-L-cysteine.. The enzyme catalyses S-ubiquitinyl-[E1 ubiquitin-activating enzyme]-L-cysteine + [acceptor protein]-L-lysine = [E1 ubiquitin-activating enzyme]-L-cysteine + N(6)-monoubiquitinyl-[acceptor protein]-L-lysine.. It participates in protein modification; protein ubiquitination. In terms of biological role, accepts ubiquitin from the E1 complex and catalyzes its covalent attachment to other proteins. In vitro catalyzes 'Lys-11'- and 'Lys-48'-linked polyubiquitination. Acts as an essential factor of the anaphase promoting complex/cyclosome (APC/C), a cell cycle-regulated ubiquitin ligase that controls progression through mitosis. Acts by initiating 'Lys-11'-linked polyubiquitin chains on APC/C substrates, leading to the degradation of APC/C substrates by the proteasome and promoting mitotic exit. This Bos taurus (Bovine) protein is Ubiquitin-conjugating enzyme E2 C (UBE2C).